We begin with the raw amino-acid sequence, 134 residues long: Small ribosomal subunit protein uS8 (134 aa).

The protein belongs to the universal ribosomal protein uS8 family. In terms of assembly, part of the 30S ribosomal subunit. Contacts proteins S5 and S12.

Functionally, one of the primary rRNA binding proteins, it binds directly to 16S rRNA central domain where it helps coordinate assembly of the platform of the 30S subunit. The sequence is that of Small ribosomal subunit protein uS8 from Thermosipho africanus (strain TCF52B).